The primary structure comprises 316 residues: Thymidylate synthase (316 aa).

DUMP contacts are provided by residues arginine 23 and 178 to 179 (RR). The Nucleophile role is filled by cysteine 198. Residues 218–221 (RSAD), asparagine 229, and 259–261 (HLY) each bind dUMP. Aspartate 221 contacts (6R)-5,10-methylene-5,6,7,8-tetrahydrofolate. Residue alanine 315 participates in (6R)-5,10-methylene-5,6,7,8-tetrahydrofolate binding.

Belongs to the thymidylate synthase family. Bacterial-type ThyA subfamily. In terms of assembly, homodimer.

It is found in the cytoplasm. It catalyses the reaction dUMP + (6R)-5,10-methylene-5,6,7,8-tetrahydrofolate = 7,8-dihydrofolate + dTMP. Its pathway is pyrimidine metabolism; dTTP biosynthesis. Catalyzes the reductive methylation of 2'-deoxyuridine-5'-monophosphate (dUMP) to 2'-deoxythymidine-5'-monophosphate (dTMP) while utilizing 5,10-methylenetetrahydrofolate (mTHF) as the methyl donor and reductant in the reaction, yielding dihydrofolate (DHF) as a by-product. This enzymatic reaction provides an intracellular de novo source of dTMP, an essential precursor for DNA biosynthesis. The polypeptide is Thymidylate synthase (Lacticaseibacillus casei (Lactobacillus casei)).